We begin with the raw amino-acid sequence, 231 residues long: Uracil-DNA glycosylase (231 aa).

D71 acts as the Proton acceptor in catalysis.

Belongs to the uracil-DNA glycosylase (UDG) superfamily. UNG family.

The protein resides in the cytoplasm. The catalysed reaction is Hydrolyzes single-stranded DNA or mismatched double-stranded DNA and polynucleotides, releasing free uracil.. Its function is as follows. Excises uracil residues from the DNA which can arise as a result of misincorporation of dUMP residues by DNA polymerase or due to deamination of cytosine. In Pseudomonas aeruginosa (strain UCBPP-PA14), this protein is Uracil-DNA glycosylase.